A 144-amino-acid polypeptide reads, in one-letter code: Putative pre-16S rRNA nuclease (144 aa).

The protein belongs to the YqgF nuclease family.

It is found in the cytoplasm. In terms of biological role, could be a nuclease involved in processing of the 5'-end of pre-16S rRNA. This is Putative pre-16S rRNA nuclease from Acaryochloris marina (strain MBIC 11017).